The primary structure comprises 216 residues: Uracil phosphoribosyltransferase (216 aa).

5-phospho-alpha-D-ribose 1-diphosphate contacts are provided by residues arginine 85, arginine 110, and 135–143 (DPMVATGYS). Residues isoleucine 200 and 205–207 (GDA) contribute to the uracil site. Aspartate 206 contributes to the 5-phospho-alpha-D-ribose 1-diphosphate binding site.

Belongs to the UPRTase family. Requires Mg(2+) as cofactor.

It carries out the reaction UMP + diphosphate = 5-phospho-alpha-D-ribose 1-diphosphate + uracil. It participates in pyrimidine metabolism; UMP biosynthesis via salvage pathway; UMP from uracil: step 1/1. Allosterically activated by GTP. Its function is as follows. Catalyzes the conversion of uracil and 5-phospho-alpha-D-ribose 1-diphosphate (PRPP) to UMP and diphosphate. The sequence is that of Uracil phosphoribosyltransferase from Burkholderia mallei (strain NCTC 10247).